We begin with the raw amino-acid sequence, 344 residues long: Rho guanine nucleotide exchange factor 39 (344 aa).

The DH domain occupies 22-197; it reads KRVCTARELL…SETAQKVHAI (176 aa). One can recognise a PH domain in the interval 227 to 331; sequence WFLRQGWLLV…WHHSLTLAIR (105 aa).

It is found in the cell membrane. In terms of biological role, promotes cell proliferation. The chain is Rho guanine nucleotide exchange factor 39 (Arhgef39) from Mus musculus (Mouse).